The primary structure comprises 103 residues: Large ribosomal subunit protein bL21 (103 aa).

Belongs to the bacterial ribosomal protein bL21 family. Part of the 50S ribosomal subunit. Contacts protein L20.

This protein binds to 23S rRNA in the presence of protein L20. This Clostridium kluyveri (strain NBRC 12016) protein is Large ribosomal subunit protein bL21.